We begin with the raw amino-acid sequence, 430 residues long: Enolase (430 aa).

Glutamine 163 serves as a coordination point for (2R)-2-phosphoglycerate. Residue glutamate 205 is the Proton donor of the active site. Aspartate 242, glutamate 288, and aspartate 315 together coordinate Mg(2+). Residues lysine 340, arginine 369, serine 370, and lysine 391 each coordinate (2R)-2-phosphoglycerate. The Proton acceptor role is filled by lysine 340.

It belongs to the enolase family. It depends on Mg(2+) as a cofactor.

Its subcellular location is the cytoplasm. It localises to the secreted. The protein resides in the cell surface. It carries out the reaction (2R)-2-phosphoglycerate = phosphoenolpyruvate + H2O. It participates in carbohydrate degradation; glycolysis; pyruvate from D-glyceraldehyde 3-phosphate: step 4/5. In terms of biological role, catalyzes the reversible conversion of 2-phosphoglycerate (2-PG) into phosphoenolpyruvate (PEP). It is essential for the degradation of carbohydrates via glycolysis. In Acidobacterium capsulatum (strain ATCC 51196 / DSM 11244 / BCRC 80197 / JCM 7670 / NBRC 15755 / NCIMB 13165 / 161), this protein is Enolase.